An 87-amino-acid polypeptide reads, in one-letter code: MAKGQSLQDPFLNALRRERIPVSIYLVNGIKLQGQIESFDQFVILLKNTVNQMVYKHAISTVVPARPVSHHSGDRPQGDRPQEKSED.

The Sm domain maps to 9 to 68; the sequence is DPFLNALRRERIPVSIYLVNGIKLQGQIESFDQFVILLKNTVNQMVYKHAISTVVPARPV. Residues 65 to 87 are disordered; it reads ARPVSHHSGDRPQGDRPQEKSED. Over residues 71–87 the composition is skewed to basic and acidic residues; it reads HSGDRPQGDRPQEKSED.

Belongs to the Hfq family. In terms of assembly, homohexamer.

Functionally, RNA chaperone that binds small regulatory RNA (sRNAs) and mRNAs to facilitate mRNA translational regulation in response to envelope stress, environmental stress and changes in metabolite concentrations. Also binds with high specificity to tRNAs. The chain is RNA-binding protein Hfq from Vibrio parahaemolyticus serotype O3:K6 (strain RIMD 2210633).